The following is a 194-amino-acid chain: Peptidyl-tRNA hydrolase (194 aa).

Residue Tyr-16 coordinates tRNA. His-21 functions as the Proton acceptor in the catalytic mechanism. TRNA is bound by residues Phe-67, Asn-69, and Asn-115.

This sequence belongs to the PTH family. As to quaternary structure, monomer.

The protein resides in the cytoplasm. It catalyses the reaction an N-acyl-L-alpha-aminoacyl-tRNA + H2O = an N-acyl-L-amino acid + a tRNA + H(+). Its function is as follows. Hydrolyzes ribosome-free peptidyl-tRNAs (with 1 or more amino acids incorporated), which drop off the ribosome during protein synthesis, or as a result of ribosome stalling. Catalyzes the release of premature peptidyl moieties from peptidyl-tRNA molecules trapped in stalled 50S ribosomal subunits, and thus maintains levels of free tRNAs and 50S ribosomes. The sequence is that of Peptidyl-tRNA hydrolase from Shigella dysenteriae serotype 1 (strain Sd197).